A 164-amino-acid chain; its full sequence is UPF0304 protein YE1336 (164 aa).

Belongs to the UPF0304 family.

In Yersinia enterocolitica serotype O:8 / biotype 1B (strain NCTC 13174 / 8081), this protein is UPF0304 protein YE1336.